The following is a 123-amino-acid chain: Large ribosomal subunit protein bL17 (123 aa).

It belongs to the bacterial ribosomal protein bL17 family. Part of the 50S ribosomal subunit. Contacts protein L32.

In Borrelia hermsii (strain HS1 / DAH), this protein is Large ribosomal subunit protein bL17.